A 446-amino-acid chain; its full sequence is DNA repair protein RadA (446 aa).

A C4-type zinc finger spans residues 10–27 (CQACGNQQSKWLGKCPDC). 96–103 (GSPGVGKS) provides a ligand contact to ATP. The short motif at 253–257 (KNRFG) is the RadA KNRFG motif element. Residues 349–446 (DVFVNISGGV…KELSQVLEWM (98 aa)) form a lon-protease-like region.

Belongs to the RecA family. RadA subfamily.

Functionally, DNA-dependent ATPase involved in processing of recombination intermediates, plays a role in repairing DNA breaks. Stimulates the branch migration of RecA-mediated strand transfer reactions, allowing the 3' invading strand to extend heteroduplex DNA faster. Binds ssDNA in the presence of ADP but not other nucleotides, has ATPase activity that is stimulated by ssDNA and various branched DNA structures, but inhibited by SSB. Does not have RecA's homology-searching function. This Campylobacter jejuni subsp. jejuni serotype O:2 (strain ATCC 700819 / NCTC 11168) protein is DNA repair protein RadA.